The sequence spans 236 residues: Biosynthetic peptidoglycan transglycosylase (236 aa).

A helical transmembrane segment spans residues 12 to 31 (ALLWFAAGSALVVLVLRWVP).

This sequence belongs to the glycosyltransferase 51 family.

The protein localises to the cell inner membrane. The enzyme catalyses [GlcNAc-(1-&gt;4)-Mur2Ac(oyl-L-Ala-gamma-D-Glu-L-Lys-D-Ala-D-Ala)](n)-di-trans,octa-cis-undecaprenyl diphosphate + beta-D-GlcNAc-(1-&gt;4)-Mur2Ac(oyl-L-Ala-gamma-D-Glu-L-Lys-D-Ala-D-Ala)-di-trans,octa-cis-undecaprenyl diphosphate = [GlcNAc-(1-&gt;4)-Mur2Ac(oyl-L-Ala-gamma-D-Glu-L-Lys-D-Ala-D-Ala)](n+1)-di-trans,octa-cis-undecaprenyl diphosphate + di-trans,octa-cis-undecaprenyl diphosphate + H(+). It functions in the pathway cell wall biogenesis; peptidoglycan biosynthesis. Its function is as follows. Peptidoglycan polymerase that catalyzes glycan chain elongation from lipid-linked precursors. This Pseudomonas syringae pv. tomato (strain ATCC BAA-871 / DC3000) protein is Biosynthetic peptidoglycan transglycosylase.